The chain runs to 1098 residues: Ubiquitin carboxyl-terminal hydrolase 36 (1098 aa).

Residues 72 to 86 (RHRSGDELQARKPGT) show a composition bias toward basic and acidic residues. A disordered region spans residues 72-97 (RHRSGDELQARKPGTERVSGSGGDGV). The 302-residue stretch at 122 to 423 (AGLHNLGNTC…QAYVLFYLRI (302 aa)) folds into the USP domain. Cys131 serves as the catalytic Nucleophile. The active-site Proton acceptor is the His382. Disordered regions lie at residues 428 to 464 (KSPE…VPSP) and 483 to 574 (EVGV…RDTI). Ser429, Ser463, Ser547, and Ser578 each carry phosphoserine. Over residues 540 to 558 (PLQSLTTSPTTSQGSPGTG) the composition is skewed to low complexity. The interval 589 to 640 (GHRLKGEGSGVDLEKGDSSSSSPEHSASSDPAKAPQTAESRAAHACDSQGTN) is disordered. Over residues 606-617 (SSSSSPEHSASS) the composition is skewed to low complexity. The residue at position 663 (Ser663) is a Phosphoserine. 2 disordered regions span residues 664–710 (PALS…SPSA) and 722–973 (HPVV…ALSV). The span at 665–677 (ALSSTTTEPTSLM) shows a compositional bias: polar residues. Position 678 is a phosphoserine (Ser678). Residues 683 to 692 (KKLALSAKKA) show a composition bias toward low complexity. A Phosphoserine modification is found at Ser709. The segment covering 746–763 (HPHSASLSSSSAKPLGTS) has biased composition (low complexity). Polar residues predominate over residues 853–878 (GQFQDQSWSSGSQKEEGTQPQVNGHQ). The segment covering 889–898 (SSRKRRKRKR) has biased composition (basic residues). Over residues 901–917 (GLSQEATPSQDLIQHSC) the composition is skewed to polar residues. The segment covering 921–932 (DHSEPEARTELQ) has biased composition (basic and acidic residues). Over residues 933–943 (KKKKKKRRKRK) the composition is skewed to basic residues. A compositionally biased stretch (basic and acidic residues) spans 944–960 (PEPQQDEESKHPGDQRS).

This sequence belongs to the peptidase C19 family. In terms of assembly, interacts with isoform 3 of FBXW7; the interaction inhibits MYC degradation induced by SCF(FBW7) complex. Interacts with NTRK1; USP36 does not deubiquitinate NTRK1. Interacts with NEDD4L (via domains WW1, 3 and 4); the interaction inhibits ubiquitination of, at least, NTRK1, KCNQ2 and KCNQ3 by NEDD4L. Interacts (via C-terminus) with EXOSC10 (via C-terminus); the interaction is facilitated by the association with RNA and promotes sumoylation of EXOSC10. Polyubiquitinated by NEDD4L, no effect on USP36 protein levels. Both proteins interact with and regulate each other's ubiquitination levels.

Its subcellular location is the nucleus. It is found in the nucleolus. It localises to the cytoplasm. It carries out the reaction Thiol-dependent hydrolysis of ester, thioester, amide, peptide and isopeptide bonds formed by the C-terminal Gly of ubiquitin (a 76-residue protein attached to proteins as an intracellular targeting signal).. Its function is as follows. Deubiquitinase essential for the regulation of nucleolar structure and function. Required for cell and organism viability. Plays an important role in ribosomal RNA processing and protein synthesis, which is mediated, at least in part, through deubiquitination of DHX33, NPM1 and FBL, regulating their protein stability. Functions as a transcriptional repressor by deubiquiting histone H2B at the promoters of genes critical for cellular differentiation, such as CDKN1A, thereby preventing histone H3 'Lys-4' trimethylation (H3K4). Specifically deubiquitinates MYC in the nucleolus, leading to prevent MYC degradation by the proteasome: acts by specifically interacting with isoform 3 of FBXW7 (FBW7gamma) in the nucleolus and counteracting ubiquitination of MYC by the SCF(FBW7) complex. In contrast, it does not interact with isoform 1 of FBXW7 (FBW7alpha) in the nucleoplasm. Interacts to and regulates the actions of E3 ubiquitin-protein ligase NEDD4L over substrates such as NTRK1, KCNQ2 and KCNQ3, affecting their expression an functions. Deubiquitinates SOD2, regulates SOD2 protein stability. Deubiquitinase activity is required to control selective autophagy activation by ubiquitinated proteins. Promotes CEP63 stabilization through 'Lys-48'-linked deubiquitination leading to increased stability. Acts as a SUMO ligase to promote EXOSC10 sumoylation critical for the nucleolar RNA exosome function in rRNA processing. Binds to pre-rRNAs. This chain is Ubiquitin carboxyl-terminal hydrolase 36 (Usp36), found in Mus musculus (Mouse).